Consider the following 370-residue polypeptide: MRTSPMPAKFRSVRVVVITGSVTAAPVRVSETLRRLIDVSVLAENSGREPADERRGDFSAHTEPYRRELLAHCYRMTGSLHDAEDLVQETLLRAWKAYEGFAGKSSLRTWLHRIATNTCLTALEGRRRRPLPTGLGRPSADPSGELVERREVSWLEPLPDVTDDPADPSTIVGNRESVRLAFVAALQHLSPRQRAVLLLRDVLQWKSAEVADAIGTSTVAVNSLLQRARSQLQTVRPSAADRLSAPDSPEAQDLLARYIAAFEAYDIDRLVELFTAEAIWEMPPYTGWYQGAQAIVTLIHQQCPAYSPGDMRLISLIANGQPAAAMYMRAGDVHLPFQLHVLDMAADRVSHVVAFLDTTLFPKFGLPDSL.

Residues 63–129 (EPYRRELLAH…LTALEGRRRR (67 aa)) are sigma-70 factor domain-2. The Polymerase core binding signature appears at 85-88 (DLVQ). The segment at 180 to 232 (LAFVAALQHLSPRQRAVLLLRDVLQWKSAEVADAIGTSTVAVNSLLQRARSQL) is sigma-70 factor domain-4. Residues 207–226 (SAEVADAIGTSTVAVNSLLQ) constitute a DNA-binding region (H-T-H motif).

It belongs to the sigma-70 factor family. ECF subfamily. In terms of assembly, interacts transiently with the RNA polymerase catalytic core formed by RpoA, RpoB, RpoC and RpoZ (2 alpha, 1 beta, 1 beta' and 1 omega subunit) to form the RNA polymerase holoenzyme that can initiate transcription.

Sigma factors are initiation factors that promote the attachment of RNA polymerase to specific initiation sites and are then released. Extracytoplasmic function (ECF) sigma factors are held in an inactive form by a cognate anti-sigma factor until released, although no anti-sigma factor is known for this protein. May be involved in host intracellular survival after infection (strains H37Rv and CDC 1551). A role in the SOS response is controversial; it has been seen in strain CDC 1551 but not in H37Rv. This chain is ECF RNA polymerase sigma factor SigG (sigG), found in Mycobacterium tuberculosis (strain CDC 1551 / Oshkosh).